The sequence spans 497 residues: L-amino-acid oxidase BjussuLAAO-I (497 aa).

The signal sequence occupies residues 1–13 (MNVFFMFSKPGKL). A disulfide bond links cysteine 23 and cysteine 186. FAD is bound by residues 56 to 57 (MS), 76 to 77 (EA), 76 to 80 (EASER), glutamine 84, and 100 to 103 (GPMR). Position 103 (arginine 103) interacts with substrate. Residue asparagine 185 is glycosylated (N-linked (GlcNAc...) asparagine). Histidine 236 lines the substrate pocket. Valine 274 provides a ligand contact to FAD. The cysteines at positions 344 and 425 are disulfide-linked. Residue tyrosine 385 participates in substrate binding. FAD contacts are provided by residues glutamate 470, 477–482 (GWIAST), and 478–482 (WIAST). 477-478 (GW) provides a ligand contact to substrate.

Belongs to the flavin monoamine oxidase family. FIG1 subfamily. As to quaternary structure, homodimer; non-covalently linked. FAD serves as cofactor. Expressed by the venom gland.

The protein resides in the secreted. The catalysed reaction is an L-alpha-amino acid + O2 + H2O = a 2-oxocarboxylate + H2O2 + NH4(+). The enzyme catalyses L-leucine + O2 + H2O = 4-methyl-2-oxopentanoate + H2O2 + NH4(+). It carries out the reaction L-phenylalanine + O2 + H2O = 3-phenylpyruvate + H2O2 + NH4(+). It catalyses the reaction L-tryptophan + O2 + H2O = indole-3-pyruvate + H2O2 + NH4(+). The catalysed reaction is L-methionine + O2 + H2O = 4-methylsulfanyl-2-oxobutanoate + H2O2 + NH4(+). The enzyme catalyses L-isoleucine + O2 + H2O = (S)-3-methyl-2-oxopentanoate + H2O2 + NH4(+). It carries out the reaction L-tyrosine + O2 + H2O = 3-(4-hydroxyphenyl)pyruvate + H2O2 + NH4(+). It catalyses the reaction L-cysteine + O2 + H2O = 2-oxo-3-sulfanylpropanoate + H2O2 + NH4(+). Functionally, catalyzes an oxidative deamination of predominantly hydrophobic and aromatic L-amino acids, thus producing hydrogen peroxide that may contribute to the diverse toxic effects of this enzyme. Shows high specificity for L-Met, L-Leu, L-Phe, L-Tyr, L-Ile, L-Trp, a moderate activity on L-Cys and low activity on L-Val, L-Lys, L-Arg, L-His, L-Gln, L-Thr and L-Ser. Exhibits diverse biological activities, such as hemorrhage, hemolysis, edema, apoptosis of vascular endothelial cells or tumor cell lines, and antibacterial, as well as regulation of platelet aggregation. Effects of snake L-amino oxidases on platelets are controversial, since they either induce aggregation or inhibit agonist-induced aggregation. These different effects are probably due to different experimental conditions. In vitro, shows parasiticidal activities against both trypanosomes and leishmania, as a result of enzyme-catalyzed hydrogen peroxide production. In Bothrops jararacussu (Jararacussu), this protein is L-amino-acid oxidase BjussuLAAO-I.